A 174-amino-acid chain; its full sequence is MTQPLFLIGPRGCGKTTVGMALADLLNRRFVDTDQWLQSQLNMTVAEIVEREEWAGFRARETAALEAVTAPSTVIATGGGIILTEFNRHFMQNNGIVVYLCAPVSVLVNRLQAAPEEDLRPTLTGKPLSEEVQEVLEERDALYREVAHIIIDATNEPSQVISEIRSALAQTINC.

12-17 (GCGKTT) serves as a coordination point for ATP. Mg(2+) is bound by residues Thr-16 and Asp-32. 3 residues coordinate substrate: Asp-34, Arg-58, and Gly-79. The LID domain stretch occupies residues 112-126 (QAAPEEDLRPTLTGK). Position 120 (Arg-120) interacts with ATP. Arg-139 contributes to the substrate binding site.

This sequence belongs to the shikimate kinase family. AroL subfamily. As to quaternary structure, monomer. The cofactor is Mg(2+).

It is found in the cytoplasm. The enzyme catalyses shikimate + ATP = 3-phosphoshikimate + ADP + H(+). It participates in metabolic intermediate biosynthesis; chorismate biosynthesis; chorismate from D-erythrose 4-phosphate and phosphoenolpyruvate: step 5/7. Catalyzes the specific phosphorylation of the 3-hydroxyl group of shikimic acid using ATP as a cosubstrate. The protein is Shikimate kinase 2 of Shigella dysenteriae serotype 1 (strain Sd197).